A 297-amino-acid chain; its full sequence is Probable esterase afoC (297 aa).

Ser136 serves as the catalytic Charge relay system. The span at 204–217 shows a compositional bias: low complexity; that stretch reads ASSSASASVSGSES. The tract at residues 204 to 226 is disordered; the sequence is ASSSASASVSGSESAGEEEEDGH. Active-site charge relay system residues include Asp240 and His267.

The protein belongs to the LovG family.

Probable esterase; part of the gene cluster that mediates the biosynthesis of asperfuranone, a probable antitumor agent. The polyketide synthase afoG is responsible for producing the 3,5-dimethyloctadienone moiety from acetyl-CoA, three malonyl-CoA, and two S-adenosyl methionines (SAM). The 3,5-dimethyloctadienone moiety is then loaded onto the SAT domain of afoE and extended with four malonyl-CoA and one SAM, which leads to the formation of 2,4-dihydroxy-6-(5,7-dimethyl-2-oxo-trans-3-trans-5-nonadienyl)-3-methylbenzaldehyde (compound 2) after reductive release and aldol condensation. AfoD is the next enzyme in the biosynthesis sequence and hydroxylates the side chain at the benzylic position of compound 2. After benzylic hydroxylation, a furan ring is formed after five-member ring hemiacetal formation and water elimination. AfoF and afoC are proposed to oxidize the R-diketone proton and to reduce the unconjugated carbonyl group, respectively, to generate asperfuranone. Since no intermediates could be isolated from afoF and afoC deletants, the sequence of these two enzymes is not fully understood. Moreover, since afoC deletant still produces a small amount of asperfuranone, other endogenous oxidoreductases might catalyze the same reaction with much less efficiency. This Emericella nidulans (strain FGSC A4 / ATCC 38163 / CBS 112.46 / NRRL 194 / M139) (Aspergillus nidulans) protein is Probable esterase afoC.